Reading from the N-terminus, the 699-residue chain is Elongation factor G (699 aa).

The tr-type G domain occupies 8 to 288 (EDYRNFGIMA…AVVDYLPSPI (281 aa)). Residues 17–24 (AHIDAGKT), 86–90 (DTPGH), and 140–143 (NKMD) each bind GTP.

Belongs to the TRAFAC class translation factor GTPase superfamily. Classic translation factor GTPase family. EF-G/EF-2 subfamily.

The protein localises to the cytoplasm. In terms of biological role, catalyzes the GTP-dependent ribosomal translocation step during translation elongation. During this step, the ribosome changes from the pre-translocational (PRE) to the post-translocational (POST) state as the newly formed A-site-bound peptidyl-tRNA and P-site-bound deacylated tRNA move to the P and E sites, respectively. Catalyzes the coordinated movement of the two tRNA molecules, the mRNA and conformational changes in the ribosome. This Rhizobium meliloti (strain 1021) (Ensifer meliloti) protein is Elongation factor G.